Reading from the N-terminus, the 432-residue chain is Serine hydroxymethyltransferase (432 aa).

(6S)-5,6,7,8-tetrahydrofolate-binding positions include leucine 127 and 131–133; that span reads GHL. An N6-(pyridoxal phosphate)lysine modification is found at lysine 236.

This sequence belongs to the SHMT family. As to quaternary structure, homodimer. The cofactor is pyridoxal 5'-phosphate.

The protein localises to the cytoplasm. It catalyses the reaction (6R)-5,10-methylene-5,6,7,8-tetrahydrofolate + glycine + H2O = (6S)-5,6,7,8-tetrahydrofolate + L-serine. It participates in one-carbon metabolism; tetrahydrofolate interconversion. It functions in the pathway amino-acid biosynthesis; glycine biosynthesis; glycine from L-serine: step 1/1. In terms of biological role, catalyzes the reversible interconversion of serine and glycine with tetrahydrofolate (THF) serving as the one-carbon carrier. This reaction serves as the major source of one-carbon groups required for the biosynthesis of purines, thymidylate, methionine, and other important biomolecules. Also exhibits THF-independent aldolase activity toward beta-hydroxyamino acids, producing glycine and aldehydes, via a retro-aldol mechanism. This chain is Serine hydroxymethyltransferase, found in Rhizobium rhizogenes (strain K84 / ATCC BAA-868) (Agrobacterium radiobacter).